Consider the following 427-residue polypeptide: Trigger factor (427 aa).

The 86-residue stretch at 163–248 (GDTVVIDFVG…IHEVKAKEVP (86 aa)) folds into the PPIase FKBP-type domain.

It belongs to the FKBP-type PPIase family. Tig subfamily.

The protein resides in the cytoplasm. The enzyme catalyses [protein]-peptidylproline (omega=180) = [protein]-peptidylproline (omega=0). Its function is as follows. Involved in protein export. Acts as a chaperone by maintaining the newly synthesized protein in an open conformation. Functions as a peptidyl-prolyl cis-trans isomerase. In Streptococcus pneumoniae (strain ATCC 700669 / Spain 23F-1), this protein is Trigger factor.